The chain runs to 419 residues: UDP-N-acetylglucosamine 1-carboxyvinyltransferase (419 aa).

Phosphoenolpyruvate is bound at residue 22–23 (KN). Arginine 91 is a binding site for UDP-N-acetyl-alpha-D-glucosamine. Residue cysteine 115 is the Proton donor of the active site. Cysteine 115 carries the post-translational modification 2-(S-cysteinyl)pyruvic acid O-phosphothioketal. Residues 120–124 (RPVDL), 160–163 (KVSV), aspartate 305, and valine 327 each bind UDP-N-acetyl-alpha-D-glucosamine.

Belongs to the EPSP synthase family. MurA subfamily.

It is found in the cytoplasm. It catalyses the reaction phosphoenolpyruvate + UDP-N-acetyl-alpha-D-glucosamine = UDP-N-acetyl-3-O-(1-carboxyvinyl)-alpha-D-glucosamine + phosphate. The protein operates within cell wall biogenesis; peptidoglycan biosynthesis. Cell wall formation. Adds enolpyruvyl to UDP-N-acetylglucosamine. The protein is UDP-N-acetylglucosamine 1-carboxyvinyltransferase of Shigella sonnei (strain Ss046).